The chain runs to 247 residues: 4-nitrobenzoate reductase (247 aa).

29–33 is a binding site for FMN; the sequence is RRSVR. Residues Ser-59, Arg-112, Tyr-120, and Leu-126 each coordinate NADP(+). Position 232 (Arg-232) interacts with FMN.

This sequence belongs to the nitroreductase family. FMN is required as a cofactor.

It carries out the reaction 4-nitrobenzoate + 2 NADPH + 2 H(+) = 4-hydroxylaminobenzoate + 2 NADP(+) + H2O. Functionally, nitroreductase involved in the degradation of nitroaromatic compounds. Catalyzes the conversion of 4-nitrobenzoate to 4-hydroxylaminobenzoate. The chain is 4-nitrobenzoate reductase from Nocardioides sp. (strain LMS-CY).